The sequence spans 439 residues: GSGKSFTMMHKDNGIYVLACFDILEYLRVYNGSQGNNSKFLVPVVSFFEIYGGKLFDLLNNRQRLQALEDGKGNVQITGLTEKQISSVDAMLNLIDSGLTLRAVGATGANADSSRSHAILQIALKYTKSGKEYSRISFIDLAGSERASDVQNSDRQTRMEGAEINKSLLALKECIRAMDKSNDSKSGAHIPFRGSKLTMVLRDSFIGNSQTVMIANISPNDKSCDNTLNTLRYADRVKELQHGKGGIIKFNVLKMGQNAADVILGTARDDENDVYKAGIVGVNAAPSQQARVPPASQAPITARQIQQNLPQPHYNPNYNPPNSKPAFEPRVETTDEDDMVRTHCDLVDSIYEQEDLIVRAHRRQVDSMMQLVKEEVALLHAIENDQVSIDDWLVKLSDILSRKEEAITTLKGNLSAFKQALQKEEELSHSIDLNKARKK.

1-5 (GSGKS) is an ATP binding site. In terms of domain architecture, Kinesin motor spans 1 to 240 (GSGKSFTMMH…LRYADRVKEL (240 aa)).

This sequence belongs to the TRAFAC class myosin-kinesin ATPase superfamily. Kinesin family. KIN-13 subfamily. As to quaternary structure, interacts with PLK. Post-translationally, phosphorylated by PLK.

The protein resides in the cytoplasm. Its subcellular location is the cytoskeleton. It is found in the cell projection. The protein localises to the cilium. It localises to the flagellum. The protein resides in the flagellum basal body. Its subcellular location is the flagellum axoneme. It is found in the spindle. The protein localises to the chromosome. It localises to the centromere. The protein resides in the kinetochore. Functionally, involved in cell cycle. Involved in formation of flagella, regulation of flagellar length, and formation of median bodies during interphase. Regulates flagellar length in all eight distal flagellar tips by promoting disassembly of the microtubules. Disassembles microtubules at the distal flagellar tips in a length-dependent manner in order to maintain different equilibrium lengths of the four flagellar pairs. Regulates interphase and mitotic microtubule dynamics. Regulates microtubule disassembly dynamics of the dual mitotic spindles and the median body. This chain is Kinesin-like protein KIN-13, found in Giardia intestinalis (Giardia lamblia).